The primary structure comprises 243 residues: UPF0246 protein spyM18_2163 (243 aa).

The protein belongs to the UPF0246 family.

The polypeptide is UPF0246 protein spyM18_2163 (Streptococcus pyogenes serotype M18 (strain MGAS8232)).